A 73-amino-acid chain; its full sequence is Conotoxin Asp7/Gla(3)-TxVI (73 aa).

The first 19 residues, 1–19 (MQKLIILLLVAAVLMSTQA), serve as a signal peptide directing secretion. A propeptide spanning residues 20-44 (VLQEKRPKEKIKFLSKRKTDAEKQQ) is cleaved from the precursor. Intrachain disulfides connect Cys-48-Cys-62, Cys-55-Cys-66, and Cys-61-Cys-71. Residues Pro-49 and Pro-54 each carry the 4-hydroxyproline modification. At Glu-60 the chain carries 4-carboxyglutamate. Trp-64 carries the post-translational modification 6'-bromotryptophan.

As to expression, expressed by the venom duct.

It is found in the secreted. This Conus textile (Cloth-of-gold cone) protein is Conotoxin Asp7/Gla(3)-TxVI.